The sequence spans 328 residues: MKKTVLSGVQATGSLHLGNYLGSIRNWVKMQEEYNCFFFLADLHSITVDIAPSELKRSVIETLAIYLAAGLDPNKVTIFAQSMVKEHAELAWLLNCVTPLGWLKRMTQFKDKAGKDQEKACLGLFSYPVLMAADILIYKADIVPVGEDQKQHLELTRDIAGVINRKFNKEILKVPEVLIGGSGTRIMSLRDGSKKMSKSDSSDFSRINLRDDNDLIHQKIKKAKTDHLSFVSYDKEARPEISNLLDIYTTLSEEKLENIIQNYEGFAKFKEDLAEIIITNLQPMRDKYLELMNDQEYLLKILHQGAEKARVRASETVNELKEQFGFVI.

ATP is bound by residues Q10 to T12 and G18 to N19. A 'HIGH' region motif is present at residues A11–N19. An L-tryptophan-binding site is contributed by D134. ATP-binding positions include G146 to D148, I186, and K195 to S199. Residues K195 to S199 carry the 'KMSKS' region motif.

It belongs to the class-I aminoacyl-tRNA synthetase family. As to quaternary structure, homodimer.

It localises to the cytoplasm. It carries out the reaction tRNA(Trp) + L-tryptophan + ATP = L-tryptophyl-tRNA(Trp) + AMP + diphosphate + H(+). In terms of biological role, catalyzes the attachment of tryptophan to tRNA(Trp). In Rickettsia bellii (strain RML369-C), this protein is Tryptophan--tRNA ligase.